A 216-amino-acid chain; its full sequence is 3-isopropylmalate dehydratase small subunit (216 aa).

It belongs to the LeuD family. LeuD type 1 subfamily. In terms of assembly, heterodimer of LeuC and LeuD.

It catalyses the reaction (2R,3S)-3-isopropylmalate = (2S)-2-isopropylmalate. It participates in amino-acid biosynthesis; L-leucine biosynthesis; L-leucine from 3-methyl-2-oxobutanoate: step 2/4. Catalyzes the isomerization between 2-isopropylmalate and 3-isopropylmalate, via the formation of 2-isopropylmaleate. This Polaromonas sp. (strain JS666 / ATCC BAA-500) protein is 3-isopropylmalate dehydratase small subunit.